Consider the following 564-residue polypeptide: 4-coumarate--CoA ligase 1 (564 aa).

ATP is bound by residues Ser-209, Ser-210, Gly-211, Thr-212, Thr-213, and Lys-217. Tyr-259 and Thr-263 together coordinate (E)-4-coumaroyl-AMP. Residue Arg-280 coordinates CoA. An SBD1 region spans residues Asp-282–Gln-351. (E)-4-coumaroyl-AMP-binding residues include Ala-329, Gln-351, Gly-352, Thr-356, and Met-364. The ATP site is built by Gln-351, Gly-352, and Thr-356. The tract at residues Gly-352–Tyr-419 is SBD2. ATP contacts are provided by Asp-440 and Arg-455. The (E)-4-coumaroyl-AMP site is built by Lys-457 and Lys-461. CoA contacts are provided by Arg-463 and Gly-464. Lys-547 contacts ATP.

Belongs to the ATP-dependent AMP-binding enzyme family. Mg(2+) serves as cofactor. Expressed in roots, stems, leaf blades and leaf sheaths.

It carries out the reaction (E)-ferulate + ATP + CoA = (E)-feruloyl-CoA + AMP + diphosphate. The enzyme catalyses (E)-4-coumarate + ATP + CoA = (E)-4-coumaroyl-CoA + AMP + diphosphate. It catalyses the reaction (E)-cinnamate + ATP + CoA = (E)-cinnamoyl-CoA + AMP + diphosphate. The catalysed reaction is (E)-caffeate + ATP + CoA = (E)-caffeoyl-CoA + AMP + diphosphate. It carries out the reaction (E)-ferulate + ATP + H(+) = (E)-feruloyl-AMP + diphosphate. The enzyme catalyses (E)-feruloyl-AMP + CoA = (E)-feruloyl-CoA + AMP + H(+). It catalyses the reaction (E)-4-coumarate + ATP + H(+) = (E)-4-coumaroyl-AMP + diphosphate. The catalysed reaction is (E)-4-coumaroyl-AMP + CoA = (E)-4-coumaroyl-CoA + AMP + H(+). It carries out the reaction (E)-caffeate + ATP + H(+) = (E)-caffeoyl-AMP + diphosphate. The enzyme catalyses (E)-caffeoyl-AMP + CoA = (E)-caffeoyl-CoA + AMP + H(+). The protein operates within phytoalexin biosynthesis; 3,4',5-trihydroxystilbene biosynthesis; 3,4',5-trihydroxystilbene from trans-4-coumarate: step 1/2. Functionally, involved in the phenylpropanoid metabolism by mediating the activation of a number of hydroxycinnamates for the biosynthesis of monolignols and other phenolic secondary metabolites. Catalyzes the formation of CoA esters of cinnamate, 4-coumarate, caffeate and ferulate. Is more efficient with substrates in the following order: ferulate &gt; 4-coumarate &gt; cinnamate &gt; caffeate. Cannot convert sinapate to its corresponding CoA ester. Follows a two-step reaction mechanism, wherein the carboxylate substrate first undergoes adenylation by ATP, followed by a thioesterification in the presence of CoA to yield the final CoA thioester. This chain is 4-coumarate--CoA ligase 1, found in Oryza sativa subsp. japonica (Rice).